The primary structure comprises 510 residues: NAD(P)H-quinone oxidoreductase subunit 2 B, chloroplastic (510 aa).

Transmembrane regions (helical) follow at residues 24-44 (LLLFDGSFIFPECILIFGLIL), 57-77 (IPWLYFISSTSLVMSITALLF), 99-119 (IFQFLILLCSTLCIPLSVEYI), 124-144 (MAITEFLLFVLTATLGGMFLC), 149-169 (LITIFVAPECFSLCSYLLSGY), 183-203 (YLLMGGASSSILVHAFSWLYG), 227-247 (PGISIALIFITVGIGFKLSLA), 295-315 (WHLLLEILAILSMIVGNLIAI), 323-343 (MLAYSSIGQIGYVIIGIIVGD), 354-374 (YMLFYISMNLGTFACIVLFGL), 395-415 (ALSLALCLLSLGGLPPLAGFF), 418-438 (LHLFWCGWQAGLYFLVLIGLL), and 482-502 (LSMIVCVIASTIPGISMNPIV).

It belongs to the complex I subunit 2 family. NDH is composed of at least 16 different subunits, 5 of which are encoded in the nucleus.

The protein resides in the plastid. It localises to the chloroplast thylakoid membrane. The enzyme catalyses a plastoquinone + NADH + (n+1) H(+)(in) = a plastoquinol + NAD(+) + n H(+)(out). It carries out the reaction a plastoquinone + NADPH + (n+1) H(+)(in) = a plastoquinol + NADP(+) + n H(+)(out). In terms of biological role, NDH shuttles electrons from NAD(P)H:plastoquinone, via FMN and iron-sulfur (Fe-S) centers, to quinones in the photosynthetic chain and possibly in a chloroplast respiratory chain. The immediate electron acceptor for the enzyme in this species is believed to be plastoquinone. Couples the redox reaction to proton translocation, and thus conserves the redox energy in a proton gradient. The sequence is that of NAD(P)H-quinone oxidoreductase subunit 2 B, chloroplastic from Manihot esculenta (Cassava).